A 49-amino-acid chain; its full sequence is Chitin-binding lectin (49 aa).

The Chitin-binding type-1 domain occupies 2 to 45 (DHRCGREATPPGKLCNDGRCCSQWGWCGTTQAYCSGKCQSQCDC). Intrachain disulfides connect Cys5/Cys22, Cys16/Cys28, Cys21/Cys35, and Cys39/Cys43.

Homodimer; disulfide-linked.

Its function is as follows. Chitin-binding lectin which is specific for N-acetylglucosamine oligomers. This Viscum album (European mistletoe) protein is Chitin-binding lectin.